The primary structure comprises 369 residues: Endoglucanase (369 aa).

The N-terminal stretch at methionine 1–alanine 22 is a signal peptide. The active-site Proton donor is the glutamate 56. Catalysis depends on aspartate 117, which acts as the Nucleophile.

Belongs to the glycosyl hydrolase 8 (cellulase D) family.

It is found in the secreted. The catalysed reaction is Endohydrolysis of (1-&gt;4)-beta-D-glucosidic linkages in cellulose, lichenin and cereal beta-D-glucans.. Its pathway is glycan metabolism; bacterial cellulose biosynthesis. Hydrolyzes carboxymethylcellulose. In Salmonella typhi, this protein is Endoglucanase (bcsZ).